We begin with the raw amino-acid sequence, 228 residues long: Cell surface Cu-only superoxide dismutase 5 (228 aa).

An N-terminal signal peptide occupies residues 1–15; it reads MKYLSIFLLATFALA. Asparagine 53 is a glycosylation site (N-linked (GlcNAc...) asparagine). Cu cation is bound by residues histidine 75 and histidine 77. Asparagine 86 carries N-linked (GlcNAc...) asparagine glycosylation. A disulfide bridge links cysteine 87 with cysteine 162. Residue histidine 93 coordinates Cu cation. A glycan (N-linked (GlcNAc...) asparagine) is linked at asparagine 98. A Cu cation-binding site is contributed by histidine 153. 5 N-linked (GlcNAc...) asparagine glycosylation sites follow: asparagine 156, asparagine 164, asparagine 176, asparagine 181, and asparagine 192. The segment covering 176 to 201 has biased composition (low complexity); that stretch reads NTTMSNSSSSSSQSAVNTSSSMASTA. The disordered stretch occupies residues 176 to 204; the sequence is NTTMSNSSSSSSQSAVNTSSSMASTAPQG. The GPI-anchor amidated asparagine moiety is linked to residue asparagine 205. A propeptide spans 206 to 228 (removed in mature form); the sequence is GAERAVVNGLLAAGVVGVIAALI.

The protein belongs to the Cu-Zn superoxide dismutase family. As to quaternary structure, monomer. Requires Cu cation as cofactor. The GPI-anchor is attached to the protein in the endoplasmic reticulum and serves to target the protein to the cell surface. There, the glucosamine-inositol phospholipid moiety is cleaved off and the GPI-modified mannoprotein is covalently attached via its lipidless GPI glycan remnant to the 1,6-beta-glucan of the outer cell wall layer.

It is found in the secreted. Its subcellular location is the cell wall. The protein resides in the membrane. It catalyses the reaction 2 superoxide + 2 H(+) = H2O2 + O2. Secreted in a disulfide-oxidized form and apo-pools of secreted SOD5 can readily capture extracellular copper for rapid induction of enzyme activity. Its function is as follows. Superoxide dismutases serve to convert damaging superoxide radicals, a key form of ROS, to less damaging hydrogen peroxide that can be converted into water by catalase action. Degrades host-derived reactive oxygen species to escape innate immune surveillance. Involved in the occurrence of miconazole-tolerant persisters in biofilms. Persisters are cells that survive high doses of an antimicrobial agent. The unusual attributes of SOD5-like fungal proteins, including the absence of zinc and an open active site that readily captures extracellular copper, make these SODs well suited to meet challenges in zinc and copper availability at the host-pathogen interface. The protein is Cell surface Cu-only superoxide dismutase 5 (SOD5) of Candida albicans (strain SC5314 / ATCC MYA-2876) (Yeast).